Reading from the N-terminus, the 150-residue chain is PTS system galactitol-specific EIIA component (150 aa).

Residues 1 to 144 (MTNLFVRSGI…TQLKEYFTKY (144 aa)) enclose the PTS EIIA type-2 domain. The active-site Tele-phosphohistidine intermediate is His62. At His62 the chain carries Phosphohistidine; by HPr.

As to quaternary structure, forms a complex with one each of subunit of GatA, GatB and 2 subunits of GatC.

Its subcellular location is the cytoplasm. The phosphoenolpyruvate-dependent sugar phosphotransferase system (sugar PTS), a major carbohydrate active transport system, catalyzes the phosphorylation of incoming sugar substrates concomitantly with their translocation across the cell membrane. The enzyme II complex composed of GatA, GatB and GatC is involved in galactitol transport. This is PTS system galactitol-specific EIIA component (gatA) from Escherichia coli O157:H7.